A 35-amino-acid chain; its full sequence is Cytochrome b6-f complex subunit 5 (35 aa).

A helical transmembrane segment spans residues 5–25; it reads LLTGIVLGSIFITLLGLLAAA.

It belongs to the PetG family. In terms of assembly, the 4 large subunits of the cytochrome b6-f complex are cytochrome b6, subunit IV (17 kDa polypeptide, PetD), cytochrome f and the Rieske protein, while the 4 small subunits are PetG, PetL, PetM and PetN. The complex functions as a dimer.

It is found in the plastid. The protein localises to the chloroplast thylakoid membrane. In terms of biological role, component of the cytochrome b6-f complex, which mediates electron transfer between photosystem II (PSII) and photosystem I (PSI), cyclic electron flow around PSI, and state transitions. PetG is required for either the stability or assembly of the cytochrome b6-f complex. This is Cytochrome b6-f complex subunit 5 from Cyanidium caldarium (Red alga).